A 216-amino-acid polypeptide reads, in one-letter code: Triosephosphate isomerase (216 aa).

Position 7–9 (7–9) interacts with substrate; the sequence is NLK. His-89 (electrophile) is an active-site residue. Residue Glu-137 is the Proton acceptor of the active site. Substrate-binding positions include Ile-142, Gly-175, and 196–197; that span reads AS.

Belongs to the triosephosphate isomerase family. In terms of assembly, homotetramer; dimer of dimers.

The protein resides in the cytoplasm. The enzyme catalyses D-glyceraldehyde 3-phosphate = dihydroxyacetone phosphate. It participates in carbohydrate biosynthesis; gluconeogenesis. Its pathway is carbohydrate degradation; glycolysis; D-glyceraldehyde 3-phosphate from glycerone phosphate: step 1/1. Its function is as follows. Involved in the gluconeogenesis. Catalyzes stereospecifically the conversion of dihydroxyacetone phosphate (DHAP) to D-glyceraldehyde-3-phosphate (G3P). This Thermoplasma acidophilum (strain ATCC 25905 / DSM 1728 / JCM 9062 / NBRC 15155 / AMRC-C165) protein is Triosephosphate isomerase.